Here is a 108-residue protein sequence, read N- to C-terminus: SPbeta prophage-derived uncharacterized HTH-type transcriptional regulator YonR (108 aa).

Residues leucine 6–leucine 60 form the HTH cro/C1-type domain. The H-T-H motif DNA-binding region spans glutamine 17–isoleucine 36.

This is SPbeta prophage-derived uncharacterized HTH-type transcriptional regulator YonR (yonR) from Bacillus subtilis (strain 168).